The sequence spans 177 residues: Chorismate pyruvate-lyase (177 aa).

Methionine 36, arginine 78, leucine 116, and glutamate 157 together coordinate substrate.

It belongs to the UbiC family. In terms of assembly, monomer.

The protein localises to the cytoplasm. The enzyme catalyses chorismate = 4-hydroxybenzoate + pyruvate. It participates in cofactor biosynthesis; ubiquinone biosynthesis. In terms of biological role, removes the pyruvyl group from chorismate, with concomitant aromatization of the ring, to provide 4-hydroxybenzoate (4HB) for the ubiquinone pathway. This chain is Chorismate pyruvate-lyase, found in Pectobacterium atrosepticum (strain SCRI 1043 / ATCC BAA-672) (Erwinia carotovora subsp. atroseptica).